Reading from the N-terminus, the 195-residue chain is O-methyltransferase (195 aa).

The protein belongs to the methyltransferase superfamily.

It participates in secondary metabolite biosynthesis. O-methyltransferase; part of the gene cluster that mediates the biosynthesis of pyrophen and campyrone B, which represent a class of fungal amino acid-derived alpha-pyrone natural products. The first step of pyrophen biosynthesis is catalyzed by the PKS-NRPS hybrid synthetase ATPKS that uptakes and condensates L-phenylalanine and malonyl-CoA in order to produce desmethyldesacetylpyrophen. Although the A domain does not discriminate between 2 enantiomeric phenylalanines, the downstream KS domain must play a gate keeping role to stereoselectively accept the L-phenylalanyl-S-phosphopantetheine (Ppant)-T domain intermediate for chain elongation. The resulting amino acid derived diketide is off-loaded through lactonization to yield the alpha-pyrone intermediate desmethyldesacetylpyrophen. The cluster-specific O-methyltransferase (OMT) then methylates desmethyldesacetylpyrophen to desacetylpyrophen, which is further acetylated to pyrophen by an endogenous yet unidentified N-acetyltransferase. ATPKS has relaxed substrate specificity to activate and extend branched-chain amino acid L-leucine to produce small amounts of campyrone B. This is O-methyltransferase from Aspergillus niger (strain ATCC 1015 / CBS 113.46 / FGSC A1144 / LSHB Ac4 / NCTC 3858a / NRRL 328 / USDA 3528.7).